Reading from the N-terminus, the 363-residue chain is 3-isopropylmalate dehydrogenase (363 aa).

Position 78 to 91 (glycine 78 to glutamate 91) interacts with NAD(+). 4 residues coordinate substrate: arginine 99, arginine 109, arginine 138, and aspartate 227. Mg(2+) is bound by residues aspartate 227, aspartate 251, and aspartate 255. Glycine 285–asparagine 297 contributes to the NAD(+) binding site.

It belongs to the isocitrate and isopropylmalate dehydrogenases family. LeuB type 1 subfamily. In terms of assembly, homodimer. It depends on Mg(2+) as a cofactor. Mn(2+) is required as a cofactor.

The protein localises to the cytoplasm. It carries out the reaction (2R,3S)-3-isopropylmalate + NAD(+) = 4-methyl-2-oxopentanoate + CO2 + NADH. It participates in amino-acid biosynthesis; L-leucine biosynthesis; L-leucine from 3-methyl-2-oxobutanoate: step 3/4. Catalyzes the oxidation of 3-carboxy-2-hydroxy-4-methylpentanoate (3-isopropylmalate) to 3-carboxy-4-methyl-2-oxopentanoate. The product decarboxylates to 4-methyl-2 oxopentanoate. This Salmonella choleraesuis (strain SC-B67) protein is 3-isopropylmalate dehydrogenase.